The chain runs to 240 residues: 1-(5-phosphoribosyl)-5-[(5-phosphoribosylamino)methylideneamino] imidazole-4-carboxamide isomerase (240 aa).

Residue Asp10 is the Proton acceptor of the active site. Catalysis depends on Asp132, which acts as the Proton donor.

It belongs to the HisA/HisF family.

Its subcellular location is the cytoplasm. It catalyses the reaction 1-(5-phospho-beta-D-ribosyl)-5-[(5-phospho-beta-D-ribosylamino)methylideneamino]imidazole-4-carboxamide = 5-[(5-phospho-1-deoxy-D-ribulos-1-ylimino)methylamino]-1-(5-phospho-beta-D-ribosyl)imidazole-4-carboxamide. It functions in the pathway amino-acid biosynthesis; L-histidine biosynthesis; L-histidine from 5-phospho-alpha-D-ribose 1-diphosphate: step 4/9. In Methanocella arvoryzae (strain DSM 22066 / NBRC 105507 / MRE50), this protein is 1-(5-phosphoribosyl)-5-[(5-phosphoribosylamino)methylideneamino] imidazole-4-carboxamide isomerase.